The chain runs to 250 residues: AA9 family lytic polysaccharide monooxygenase F (250 aa).

A signal peptide spans 1–18 (MHLKTFSNLLVFVATVAA). His-19 contacts Cu(2+). 2 N-linked (GlcNAc...) asparagine glycosylation sites follow: Asn-24 and Asn-85. 2 disulfide bridges follow: Cys-70-Cys-199 and Cys-169-Cys-250. His-108 provides a ligand contact to Cu(2+). N-linked (GlcNAc...) asparagine glycosylation occurs at Asn-146. Residues His-185 and Gln-194 each coordinate O2. Tyr-196 provides a ligand contact to Cu(2+).

This sequence belongs to the polysaccharide monooxygenase AA9 family. Cu(2+) is required as a cofactor.

The protein resides in the secreted. It carries out the reaction [(1-&gt;4)-beta-D-glucosyl]n+m + reduced acceptor + O2 = 4-dehydro-beta-D-glucosyl-[(1-&gt;4)-beta-D-glucosyl]n-1 + [(1-&gt;4)-beta-D-glucosyl]m + acceptor + H2O.. Lytic polysaccharide monooxygenase (LPMO) that depolymerizes crystalline and amorphous polysaccharides via the oxidation of scissile alpha- or beta-(1-4)-glycosidic bonds, yielding C1 and C4 oxidation products. Catalysis by LPMOs requires the reduction of the active-site copper from Cu(II) to Cu(I) by a reducing agent and H(2)O(2) or O(2) as a cosubstrate. The polypeptide is AA9 family lytic polysaccharide monooxygenase F (Botryotinia fuckeliana (strain B05.10) (Noble rot fungus)).